Consider the following 417-residue polypeptide: Xylulose 5-phosphate/phosphate translocator, chloroplastic (417 aa).

Residues 1-82 (MISLNLSPSL…GFSRKPRSIA (82 aa)) constitute a chloroplast transit peptide. The tract at residues 66 to 102 (TNPESSSGFSRKPRSIAAVGSSDSNPDEKSDLGEAEK) is disordered. At A83 the chain carries N-acetylalanine. A compositionally biased stretch (basic and acidic residues) spans 91 to 102 (PDEKSDLGEAEK). Transmembrane regions (helical) follow at residues 109 to 129 (TLQL…FNIF), 141 to 161 (WLLA…LWSF), 173 to 193 (FIIA…SACV), 198 to 218 (VAVS…VIFS), 225 to 245 (YPLA…LAAV), 247 to 267 (EVSF…GFVL), 287 to 307 (LYGC…IFVE), 318 to 338 (AIAS…SGVF), and 384 to 404 (LNAL…QATA). Residues 127–243 (NIFNKKALNV…LPIVMGCSLA (117 aa)) form the EamA domain.

This sequence belongs to the TPT transporter family. TPT (TC 2.A.7.9) subfamily. In terms of tissue distribution, widely expressed.

It localises to the plastid. The protein localises to the chloroplast membrane. Sugar phosphate/phosphate translocator that transports inorganic phosphate, triose phosphate, 3-phosphoglycerate, xylulose 5-phosphate (Xul-5-P) and to a lesser extent ribulose 5-phosphate. Does not transport ribose 5-phosphate or hexose phosphates. Provides cytosolic Xul-5-P to the chloroplast, where it is used as an intermediate in the plastidic pentose phosphate pathways. This is Xylulose 5-phosphate/phosphate translocator, chloroplastic (XPT) from Arabidopsis thaliana (Mouse-ear cress).